Consider the following 462-residue polypeptide: Cysteine--tRNA ligase (462 aa).

Residue Cys24 coordinates Zn(2+). Residues 26 to 36 (PTVYDDAHLGH) carry the 'HIGH' region motif. Zn(2+) contacts are provided by Cys199, His224, and Glu228. The short motif at 256–260 (KMSKS) is the 'KMSKS' region element. Lys259 lines the ATP pocket.

The protein belongs to the class-I aminoacyl-tRNA synthetase family. As to quaternary structure, monomer. The cofactor is Zn(2+).

Its subcellular location is the cytoplasm. The enzyme catalyses tRNA(Cys) + L-cysteine + ATP = L-cysteinyl-tRNA(Cys) + AMP + diphosphate. In Campylobacter jejuni subsp. jejuni serotype O:6 (strain 81116 / NCTC 11828), this protein is Cysteine--tRNA ligase.